Consider the following 123-residue polypeptide: Cyclic ether formation enzyme xenC (123 aa).

Residues 1 to 24 (MSSLLLSDVLSYGIFGFSALCVQA) form the signal peptide. Helical transmembrane passes span 58 to 78 (SALRYVFVSINIAVCVLLWSP) and 102 to 122 (LGESPIPHLLLVSTVGAAILV).

Belongs to the cyclic ether formation enzyme xenC family.

Its subcellular location is the membrane. It participates in mycotoxin biosynthesis. Cyclic ether formation enzyme; part of the gene cluster that mediates the biosynthesis of xenoacremones such as xenoacremone A, a compound that shows inhibitory activity toward the PI3K/AKT signaling pathway and which has the ability to induce apoptosis of A549 lung cancer cells. Within the pathway, cooperation of the hybrid PKS-NRPS xenE and the trans-acting enoyl reductase xenG is responsible for the formation of the reduced tyrosine-nonaketide derivative. The alpha/beta hydrolase xenA then accelerates intramolecular nucleophilic attack to give a pyrrolidone derivative. Subsequently, three enzymes, xenF, xenD, and xenC, coordinately participate in the conversion to xenoacremone B. XenF catalyzes sigmatropic rearrangement to form an A-ring, which leads to an unusual intermediate with a hexane ring, which is required for the formation of the tricarbocyclic product. Epoxidation catalyzed by xenD and the formation of the paracyclophane ether catalyzed by xenC initiate a spontaneous intramolecular Diels-Alder (IMDA) reaction to yield xenoacremone B. Spontaneous hydration of xenoacremone B leads to the formation of xenoacremone A, which undergoes subsequent methylation to afford xenoacremone C. The sequence is that of Cyclic ether formation enzyme xenC from Xenoacremonium sinensis (Endophyte fungus).